The chain runs to 467 residues: Ribulose bisphosphate carboxylase large chain (467 aa).

Lys-5 is modified (N6,N6,N6-trimethyllysine). Residues Asn-114 and Thr-164 each coordinate substrate. Lys-166 (proton acceptor) is an active-site residue. Lys-168 is a binding site for substrate. Mg(2+) is bound by residues Lys-192, Asp-194, and Glu-195. Position 192 is an N6-carboxylysine (Lys-192). Catalysis depends on His-285, which acts as the Proton acceptor. The substrate site is built by Arg-286, His-318, and Ser-370.

The protein belongs to the RuBisCO large chain family. Type I subfamily. Heterohexadecamer of 8 large chains and 8 small chains; disulfide-linked. The disulfide link is formed within the large subunit homodimers. Requires Mg(2+) as cofactor. Post-translationally, the disulfide bond which can form in the large chain dimeric partners within the hexadecamer appears to be associated with oxidative stress and protein turnover.

Its subcellular location is the plastid. The protein localises to the chloroplast. The catalysed reaction is 2 (2R)-3-phosphoglycerate + 2 H(+) = D-ribulose 1,5-bisphosphate + CO2 + H2O. The enzyme catalyses D-ribulose 1,5-bisphosphate + O2 = 2-phosphoglycolate + (2R)-3-phosphoglycerate + 2 H(+). RuBisCO catalyzes two reactions: the carboxylation of D-ribulose 1,5-bisphosphate, the primary event in carbon dioxide fixation, as well as the oxidative fragmentation of the pentose substrate in the photorespiration process. Both reactions occur simultaneously and in competition at the same active site. This is Ribulose bisphosphate carboxylase large chain from Scutellaria bolanderi (Sierra skullcap).